Here is a 634-residue protein sequence, read N- to C-terminus: Probable potassium transport system protein Kup 2 (634 aa).

The next 12 helical transmembrane spans lie at 15–35, 55–75, 101–121, 142–162, 173–193, 208–228, 252–272, 303–323, 351–371, 381–401, 408–428, and 435–455; these read LTLG…LYAF, VLSL…VIFL, WVAV…DAII, GMSQ…LFMF, LFGP…LWHI, AVTF…AVFL, WLSF…ALAL, LVIL…TGAY, IYMP…VLGF, YGIA…LIAW, PVWT…FFGA, and EGGW…FTWL.

This sequence belongs to the HAK/KUP transporter (TC 2.A.72) family.

The protein localises to the cell inner membrane. It carries out the reaction K(+)(in) + H(+)(in) = K(+)(out) + H(+)(out). Its function is as follows. Transport of potassium into the cell. Likely operates as a K(+):H(+) symporter. This Novosphingobium aromaticivorans (strain ATCC 700278 / DSM 12444 / CCUG 56034 / CIP 105152 / NBRC 16084 / F199) protein is Probable potassium transport system protein Kup 2.